The sequence spans 111 residues: Large ribosomal subunit protein P1 (111 aa).

The segment at 84–111 (PAEAAAAEEKKEEEKEESDEDMGFGLFD) is disordered.

This sequence belongs to the eukaryotic ribosomal protein P1/P2 family. In terms of assembly, P1 and P2 exist as dimers at the large ribosomal subunit. In terms of processing, phosphorylated.

In terms of biological role, plays an important role in the elongation step of protein synthesis. The sequence is that of Large ribosomal subunit protein P1 from Aspergillus fumigatus (strain ATCC MYA-4609 / CBS 101355 / FGSC A1100 / Af293) (Neosartorya fumigata).